We begin with the raw amino-acid sequence, 353 residues long: Alanine racemase (353 aa).

Lys-34 functions as the Proton acceptor; specific for D-alanine in the catalytic mechanism. Lys-34 carries the N6-(pyridoxal phosphate)lysine modification. Residue Arg-128 participates in substrate binding. Catalysis depends on Tyr-251, which acts as the Proton acceptor; specific for L-alanine. A substrate-binding site is contributed by Met-299.

It belongs to the alanine racemase family. Pyridoxal 5'-phosphate is required as a cofactor.

It catalyses the reaction L-alanine = D-alanine. The protein operates within amino-acid biosynthesis; D-alanine biosynthesis; D-alanine from L-alanine: step 1/1. In terms of biological role, catalyzes the interconversion of L-alanine and D-alanine. May also act on other amino acids. The chain is Alanine racemase (alr) from Alcanivorax borkumensis (strain ATCC 700651 / DSM 11573 / NCIMB 13689 / SK2).